We begin with the raw amino-acid sequence, 133 residues long: Small ribosomal subunit protein uS8 (133 aa).

It belongs to the universal ribosomal protein uS8 family. Part of the 30S ribosomal subunit.

One of the primary rRNA binding proteins, it binds directly to 16S rRNA central domain where it helps coordinate assembly of the platform of the 30S subunit. This chain is Small ribosomal subunit protein uS8, found in Hyperthermus butylicus (strain DSM 5456 / JCM 9403 / PLM1-5).